The primary structure comprises 136 residues: Large ribosomal subunit protein uL13 (136 aa).

The protein belongs to the universal ribosomal protein uL13 family. In terms of assembly, part of the 50S ribosomal subunit.

Functionally, this protein is one of the early assembly proteins of the 50S ribosomal subunit, although it is not seen to bind rRNA by itself. It is important during the early stages of 50S assembly. In Thermoplasma acidophilum (strain ATCC 25905 / DSM 1728 / JCM 9062 / NBRC 15155 / AMRC-C165), this protein is Large ribosomal subunit protein uL13.